The sequence spans 427 residues: Gamma-glutamyl phosphate reductase (427 aa).

This sequence belongs to the gamma-glutamyl phosphate reductase family.

It is found in the cytoplasm. The enzyme catalyses L-glutamate 5-semialdehyde + phosphate + NADP(+) = L-glutamyl 5-phosphate + NADPH + H(+). The protein operates within amino-acid biosynthesis; L-proline biosynthesis; L-glutamate 5-semialdehyde from L-glutamate: step 2/2. Its function is as follows. Catalyzes the NADPH-dependent reduction of L-glutamate 5-phosphate into L-glutamate 5-semialdehyde and phosphate. The product spontaneously undergoes cyclization to form 1-pyrroline-5-carboxylate. The protein is Gamma-glutamyl phosphate reductase of Rhizobium etli (strain ATCC 51251 / DSM 11541 / JCM 21823 / NBRC 15573 / CFN 42).